Reading from the N-terminus, the 487-residue chain is NADH-quinone oxidoreductase subunit N (487 aa).

Helical transmembrane passes span 8–28, 37–57, 71–91, 104–124, 125–145, 159–179, 203–223, 235–255, 269–289, 303–323, 327–347, 374–394, 408–427, and 449–469; these read LLAL…MLAI, AFVV…IVMA, GYAV…CTFG, EFYL…GSRH, LASL…LVGY, YMVL…LLYA, LMGG…LAPF, PAPV…CVLL, IHWL…LLAL, ISHF…QMPV, GVYL…ISMM, AVLT…GFIG, WWLS…YYLR, and AITS…ALGL.

The protein belongs to the complex I subunit 2 family. As to quaternary structure, NDH-1 is composed of 14 different subunits. Subunits NuoA, H, J, K, L, M, N constitute the membrane sector of the complex.

The protein resides in the cell inner membrane. It catalyses the reaction a quinone + NADH + 5 H(+)(in) = a quinol + NAD(+) + 4 H(+)(out). NDH-1 shuttles electrons from NADH, via FMN and iron-sulfur (Fe-S) centers, to quinones in the respiratory chain. The immediate electron acceptor for the enzyme in this species is believed to be ubiquinone. Couples the redox reaction to proton translocation (for every two electrons transferred, four hydrogen ions are translocated across the cytoplasmic membrane), and thus conserves the redox energy in a proton gradient. The chain is NADH-quinone oxidoreductase subunit N from Aeromonas hydrophila subsp. hydrophila (strain ATCC 7966 / DSM 30187 / BCRC 13018 / CCUG 14551 / JCM 1027 / KCTC 2358 / NCIMB 9240 / NCTC 8049).